A 340-amino-acid chain; its full sequence is Protein RecA (340 aa).

67-74 is a binding site for ATP; it reads GNESSGKT.

This sequence belongs to the RecA family.

It localises to the cytoplasm. Its function is as follows. Can catalyze the hydrolysis of ATP in the presence of single-stranded DNA, the ATP-dependent uptake of single-stranded DNA by duplex DNA, and the ATP-dependent hybridization of homologous single-stranded DNAs. It interacts with LexA causing its activation and leading to its autocatalytic cleavage. In Mycoplasma genitalium (strain ATCC 33530 / DSM 19775 / NCTC 10195 / G37) (Mycoplasmoides genitalium), this protein is Protein RecA.